Here is a 1111-residue protein sequence, read N- to C-terminus: Serine/threonine-protein kinase Nek10 (1111 aa).

Positions 1–16 are enriched in basic and acidic residues; it reads MPDQDTKAKSTEKTAD. 2 disordered regions span residues 1-24 and 47-72; these read MPDQ…TTTR and AINF…HRAR. Over residues 47–63 the composition is skewed to polar residues; it reads AINFDSAQNNMTKSEPT. A coiled-coil region spans residues 481 to 514; sequence YKDLVSQLNLLLEDELKQIAENIESINQKKAPLK. The 273-residue stretch at 519-791 folds into the Protein kinase domain; that stretch reads YAVLDHLGSG…MISDVMMKYL (273 aa). ATP is bound by residues 525–533 and Lys548; that span reads LGSGAFGCV. The Proton acceptor role is filled by Asp655.

Belongs to the protein kinase superfamily. NEK Ser/Thr protein kinase family. NIMA subfamily. In terms of assembly, interacts with RAF1 and MAP2K1; the interaction is direct with RAF1 and required for ERK1/2-signaling pathway activation in response to UV irradiation. Mg(2+) is required as a cofactor. Expressed in the mammary gland, lung, spleen, and kidney.

It carries out the reaction L-seryl-[protein] + ATP = O-phospho-L-seryl-[protein] + ADP + H(+). It catalyses the reaction L-threonyl-[protein] + ATP = O-phospho-L-threonyl-[protein] + ADP + H(+). Plays a role in the cellular response to UV irradiation. Mediates G2/M cell cycle arrest, MEK autoactivation and ERK1/2-signaling pathway activation in response to UV irradiation. In ciliated cells, it is involved in the regulation of mucociliary transport. In Mus musculus (Mouse), this protein is Serine/threonine-protein kinase Nek10.